The primary structure comprises 199 residues: MYFAEPVAKLIEHLAKLPGIGPKTAQKLALYLLEIPEEEARALAEAIITARKNTRYCSICFNLTDTDPCAICRNPGRNHRLLMVVEEAKDVAAMERTGSFNGIYHVLHGVLSPIKGIGPEDLKVRELLLRLSREPVEEIIIATNPTVEGEATAMYLASLLKPLNFKVTRIAHGLPVGSDIEYADELTIRKALEGRRVLE.

The C4-type zinc-finger motif lies at 57-72; it reads CSICFNLTDTDPCAIC. The region spanning 80–175 is the Toprim domain; that stretch reads RLLMVVEEAK…KVTRIAHGLP (96 aa).

This sequence belongs to the RecR family.

Functionally, may play a role in DNA repair. It seems to be involved in an RecBC-independent recombinational process of DNA repair. It may act with RecF and RecO. In Carboxydothermus hydrogenoformans (strain ATCC BAA-161 / DSM 6008 / Z-2901), this protein is Recombination protein RecR.